The chain runs to 220 residues: Nucleoside diphosphate kinase, mitochondrial (220 aa).

The N-terminal 57 residues, 1–57 (MFSRFARAFPKILASGASQRTFATVQKAFANPTSKKLIVGSSLLIGSAFATTSFVAC), are a transit peptide targeting the mitochondrion. ATP is bound by residues Lys80, Phe128, Arg156, Thr162, Arg173, and Asn183. His186 (pros-phosphohistidine intermediate) is an active-site residue.

This sequence belongs to the NDK family. Mg(2+) is required as a cofactor.

It is found in the mitochondrion intermembrane space. It catalyses the reaction a 2'-deoxyribonucleoside 5'-diphosphate + ATP = a 2'-deoxyribonucleoside 5'-triphosphate + ADP. The catalysed reaction is a ribonucleoside 5'-diphosphate + ATP = a ribonucleoside 5'-triphosphate + ADP. Functionally, major role in the synthesis of nucleoside triphosphates other than ATP. The ATP gamma phosphate is transferred to the NDP beta phosphate via a ping-pong mechanism, using a phosphorylated active-site intermediate. This chain is Nucleoside diphosphate kinase, mitochondrial (ndkM), found in Dictyostelium discoideum (Social amoeba).